An 84-amino-acid polypeptide reads, in one-letter code: Sulfur carrier protein TusA (84 aa).

The active-site Cysteine persulfide intermediate is Cys19.

This sequence belongs to the sulfur carrier protein TusA family. As to quaternary structure, interacts with IscS.

The protein localises to the cytoplasm. The protein operates within tRNA modification. Its function is as follows. Sulfur carrier protein involved in sulfur trafficking in the cell. Part of a sulfur-relay system required for 2-thiolation during synthesis of 2-thiouridine of the modified wobble base 5-methylaminomethyl-2-thiouridine (mnm(5)s(2)U) in tRNA. Interacts with IscS and stimulates its cysteine desulfurase activity. Accepts an activated sulfur from IscS, which is then transferred to TusD, and thus determines the direction of sulfur flow from IscS to 2-thiouridine formation. Also appears to be involved in sulfur transfer for the biosynthesis of molybdopterin. This is Sulfur carrier protein TusA from Proteus mirabilis (strain HI4320).